The following is a 168-amino-acid chain: 3-dehydroquinate dehydratase (168 aa).

Tyr-22 acts as the Proton acceptor in catalysis. Residues Asn-76, His-82, and Asp-89 each contribute to the substrate site. The active-site Proton donor is the His-102. Substrate-binding positions include 103–104 and Arg-113; that span reads LT.

This sequence belongs to the type-II 3-dehydroquinase family. Homododecamer.

It catalyses the reaction 3-dehydroquinate = 3-dehydroshikimate + H2O. It participates in metabolic intermediate biosynthesis; chorismate biosynthesis; chorismate from D-erythrose 4-phosphate and phosphoenolpyruvate: step 3/7. Catalyzes a trans-dehydration via an enolate intermediate. In Helicobacter acinonychis (strain Sheeba), this protein is 3-dehydroquinate dehydratase.